The chain runs to 103 residues: Putative glutaredoxin-C14 (103 aa).

The Glutaredoxin domain occupies 1-102; the sequence is MDRVMKLASE…PMLKNAGALW (102 aa). The cysteines at positions 21 and 24 are disulfide-linked. The short motif at 100-103 is the Responsive for interaction with TGA factors element; the sequence is ALWL.

This sequence belongs to the glutaredoxin family. CC-type subfamily.

It localises to the cytoplasm. The protein localises to the nucleus. Has a glutathione-disulfide oxidoreductase activity in the presence of NADPH and glutathione reductase. Reduces low molecular weight disulfides and proteins. In Oryza sativa subsp. japonica (Rice), this protein is Putative glutaredoxin-C14 (GRXC14).